We begin with the raw amino-acid sequence, 483 residues long: FAD-linked oxidoreductase pgmH (483 aa).

Residues 54 to 215 form the FAD-binding PCMH-type domain; it reads SIRLATLVVY…TEFKYRVHKQ (162 aa).

This sequence belongs to the oxygen-dependent FAD-linked oxidoreductase family. FAD serves as cofactor.

Its pathway is pigment biosynthesis. The protein operates within secondary metabolite biosynthesis. Its function is as follows. FAD-linked oxidoreductase; part of the gene cluster that mediates the biosynthesis of pleosporalin A, ascomycone A, as well as a third cryptic naphthoquinone derived pigment, all responsible for the coloration of conidia. Essential for the production of pleosporalin A, but not the 2 other final products. The pathway begins with the biosynthesis of the cyclized heptaketide 3-acetonyl-1,6,8-trihydroxy-2-naphthaldehyde by the NR-PKS pgmA. The C-6 hydroxyl group is further methylated by the O-methyltransferase pgmB to yield fusarubinaldehyde which is in turn oxidized by the cytochrome P450 monooxygenase pgmC at C-9. The C-1 hydroxyl group is then methylated spontaneously. Although pgmE, pgmD and pgmH are essential for the production of pleosporalin A, it is not the case for the 2 other final products and it remains difficult to assign a specific function to each enzyme. PgmF and pgmG seem not to be involved in pigment biosynthesis although they were regulated by the cluster-specific transcription factor pgmR. This chain is FAD-linked oxidoreductase pgmH, found in Aspergillus terreus (strain NIH 2624 / FGSC A1156).